The sequence spans 382 residues: Galactokinase (382 aa).

Residue 34–37 (EHTD) participates in substrate binding. Position 124–130 (124–130 (GAGLSSS)) interacts with ATP. 2 residues coordinate Mg(2+): Ser130 and Glu162. The active-site Proton acceptor is the Asp174. Tyr223 serves as a coordination point for substrate.

This sequence belongs to the GHMP kinase family. GalK subfamily.

It localises to the cytoplasm. It carries out the reaction alpha-D-galactose + ATP = alpha-D-galactose 1-phosphate + ADP + H(+). It participates in carbohydrate metabolism; galactose metabolism. Functionally, catalyzes the transfer of the gamma-phosphate of ATP to D-galactose to form alpha-D-galactose-1-phosphate (Gal-1-P). This chain is Galactokinase, found in Escherichia coli O127:H6 (strain E2348/69 / EPEC).